The chain runs to 979 residues: Putative transcription initiation factor TFIID 111 kDa subunit (979 aa).

Residue Ser244 is modified to Phosphoserine.

In terms of assembly, TFIID is composed of TATA binding protein (TBP) and a number of TBP-associated factors (TAFs).

Its subcellular location is the nucleus. Its function is as follows. TAFs are components of the transcription factor IID (TFIID) complex that are essential for mediating regulation of RNA polymerase transcription. The protein is Putative transcription initiation factor TFIID 111 kDa subunit of Schizosaccharomyces pombe (strain 972 / ATCC 24843) (Fission yeast).